A 267-amino-acid polypeptide reads, in one-letter code: MEMO1 family protein MA_0601 (267 aa).

This sequence belongs to the MEMO1 family.

The protein is MEMO1 family protein MA_0601 of Methanosarcina acetivorans (strain ATCC 35395 / DSM 2834 / JCM 12185 / C2A).